Reading from the N-terminus, the 334-residue chain is tRNA uridine(34) hydroxylase (334 aa).

Residues 123-217 (SDPDVILVDT…YLEEVKAEES (95 aa)) form the Rhodanese domain. The active-site Cysteine persulfide intermediate is cysteine 177.

It belongs to the TrhO family.

The enzyme catalyses uridine(34) in tRNA + AH2 + O2 = 5-hydroxyuridine(34) in tRNA + A + H2O. Functionally, catalyzes oxygen-dependent 5-hydroxyuridine (ho5U) modification at position 34 in tRNAs. The protein is tRNA uridine(34) hydroxylase of Shewanella baltica (strain OS223).